Here is a 239-residue protein sequence, read N- to C-terminus: Probable intron-encoded endonuclease I-ZbiI (239 aa).

The protein belongs to the LAGLIDADG endonuclease family.

It localises to the mitochondrion. Functionally, endonuclease involved in mitochondrial 21S rRNA gene intron homing. This Zygosaccharomyces bisporus protein is Probable intron-encoded endonuclease I-ZbiI.